Here is a 377-residue protein sequence, read N- to C-terminus: Succinyl-diaminopimelate desuccinylase (377 aa).

Position 75 (His-75) interacts with Zn(2+). Asp-77 is an active-site residue. Asp-106 is a Zn(2+) binding site. Glu-136 serves as the catalytic Proton acceptor. The Zn(2+) site is built by Glu-137, Glu-165, and His-350.

The protein belongs to the peptidase M20A family. DapE subfamily. Homodimer. It depends on Zn(2+) as a cofactor. The cofactor is Co(2+).

It carries out the reaction N-succinyl-(2S,6S)-2,6-diaminopimelate + H2O = (2S,6S)-2,6-diaminopimelate + succinate. The protein operates within amino-acid biosynthesis; L-lysine biosynthesis via DAP pathway; LL-2,6-diaminopimelate from (S)-tetrahydrodipicolinate (succinylase route): step 3/3. In terms of biological role, catalyzes the hydrolysis of N-succinyl-L,L-diaminopimelic acid (SDAP), forming succinate and LL-2,6-diaminopimelate (DAP), an intermediate involved in the bacterial biosynthesis of lysine and meso-diaminopimelic acid, an essential component of bacterial cell walls. The sequence is that of Succinyl-diaminopimelate desuccinylase from Sphingopyxis alaskensis (strain DSM 13593 / LMG 18877 / RB2256) (Sphingomonas alaskensis).